The chain runs to 148 residues: Large ribosomal subunit protein bL9 (148 aa).

This sequence belongs to the bacterial ribosomal protein bL9 family.

In terms of biological role, binds to the 23S rRNA. The sequence is that of Large ribosomal subunit protein bL9 from Bifidobacterium animalis subsp. lactis (strain AD011).